The chain runs to 171 residues: 3-hydroxydecanoyl-[acyl-carrier-protein] dehydratase (171 aa).

Residue His70 is part of the active site.

The protein belongs to the thioester dehydratase family. FabA subfamily. In terms of assembly, homodimer.

The protein resides in the cytoplasm. The catalysed reaction is a (3R)-hydroxyacyl-[ACP] = a (2E)-enoyl-[ACP] + H2O. The enzyme catalyses (3R)-hydroxydecanoyl-[ACP] = (2E)-decenoyl-[ACP] + H2O. It catalyses the reaction (2E)-decenoyl-[ACP] = (3Z)-decenoyl-[ACP]. It participates in lipid metabolism; fatty acid biosynthesis. Its function is as follows. Necessary for the introduction of cis unsaturation into fatty acids. Catalyzes the dehydration of (3R)-3-hydroxydecanoyl-ACP to E-(2)-decenoyl-ACP and then its isomerization to Z-(3)-decenoyl-ACP. Can catalyze the dehydratase reaction for beta-hydroxyacyl-ACPs with saturated chain lengths up to 16:0, being most active on intermediate chain length. This chain is 3-hydroxydecanoyl-[acyl-carrier-protein] dehydratase, found in Chromohalobacter salexigens (strain ATCC BAA-138 / DSM 3043 / CIP 106854 / NCIMB 13768 / 1H11).